A 355-amino-acid chain; its full sequence is UDP-N-acetylglucosamine--N-acetylmuramyl-(pentapeptide) pyrophosphoryl-undecaprenol N-acetylglucosamine transferase (355 aa).

Residues 15–17 (TGG), Asn127, Arg163, Ser191, Ile244, 263–268 (ALTVSE), and Gln288 each bind UDP-N-acetyl-alpha-D-glucosamine.

It belongs to the glycosyltransferase 28 family. MurG subfamily.

It is found in the cell inner membrane. It carries out the reaction di-trans,octa-cis-undecaprenyl diphospho-N-acetyl-alpha-D-muramoyl-L-alanyl-D-glutamyl-meso-2,6-diaminopimeloyl-D-alanyl-D-alanine + UDP-N-acetyl-alpha-D-glucosamine = di-trans,octa-cis-undecaprenyl diphospho-[N-acetyl-alpha-D-glucosaminyl-(1-&gt;4)]-N-acetyl-alpha-D-muramoyl-L-alanyl-D-glutamyl-meso-2,6-diaminopimeloyl-D-alanyl-D-alanine + UDP + H(+). It functions in the pathway cell wall biogenesis; peptidoglycan biosynthesis. Functionally, cell wall formation. Catalyzes the transfer of a GlcNAc subunit on undecaprenyl-pyrophosphoryl-MurNAc-pentapeptide (lipid intermediate I) to form undecaprenyl-pyrophosphoryl-MurNAc-(pentapeptide)GlcNAc (lipid intermediate II). The sequence is that of UDP-N-acetylglucosamine--N-acetylmuramyl-(pentapeptide) pyrophosphoryl-undecaprenol N-acetylglucosamine transferase from Escherichia coli O45:K1 (strain S88 / ExPEC).